The chain runs to 436 residues: Serine protease inhibitor A6 (436 aa).

An N-terminal signal peptide occupies residues 1 to 16 (MHLLVYLSLFFALALA). The disordered stretch occupies residues 26–60 (KHRHRHEQQGHHDSAKHGHQKDKQQQEQIKNDEGK). A compositionally biased stretch (basic and acidic residues) spans 32 to 60 (EQQGHHDSAKHGHQKDKQQQEQIKNDEGK). N-linked (GlcNAc...) asparagine glycosylation is found at Asn-260 and Asn-289.

Belongs to the serpin family. As to expression, liver.

Its subcellular location is the secreted. It is found in the extracellular space. Its function is as follows. Not yet known. The polypeptide is Serine protease inhibitor A6 (serpina6) (Xenopus laevis (African clawed frog)).